We begin with the raw amino-acid sequence, 357 residues long: Inositol-tetrakisphosphate 1-kinase 3 (357 aa).

The 1D-myo-inositol 1,3,4-trisphosphate site is built by lysine 56 and lysine 98. ATP is bound by residues arginine 133 and lysine 183. Positions 190 and 222 each coordinate 1D-myo-inositol 1,3,4-trisphosphate. ATP-binding positions include 211-222 (QEFVNHGGVLFK), serine 237, and serine 262. Mg(2+) contacts are provided by aspartate 302, aspartate 317, and asparagine 319. Asparagine 319 is a 1D-myo-inositol 1,3,4-trisphosphate binding site.

The protein belongs to the ITPK1 family. Monomer. Mg(2+) serves as cofactor.

It carries out the reaction 1D-myo-inositol 3,4,5,6-tetrakisphosphate + ATP = 1D-myo-inositol 1,3,4,5,6-pentakisphosphate + ADP + H(+). The enzyme catalyses 1D-myo-inositol 1,3,4-trisphosphate + ATP = 1D-myo-inositol 1,3,4,5-tetrakisphosphate + ADP + H(+). The catalysed reaction is 1D-myo-inositol 1,3,4-trisphosphate + ATP = 1D-myo-inositol 1,3,4,6-tetrakisphosphate + ADP + H(+). Functionally, kinase that can phosphorylate various inositol polyphosphate such as Ins(3,4,5,6)P4 or Ins(1,3,4)P3 and participates in phytic acid biosynthesis in developing seeds. Phytic acid is the primary storage form of phosphorus in cereal grains and other plant seeds. This is Inositol-tetrakisphosphate 1-kinase 3 (ITPK3) from Oryza sativa subsp. indica (Rice).